A 158-amino-acid polypeptide reads, in one-letter code: Crossover junction endodeoxyribonuclease RuvC (158 aa).

Catalysis depends on residues Asp7, Glu66, and Asp139. Residues Asp7, Glu66, and Asp139 each contribute to the Mg(2+) site.

It belongs to the RuvC family. Homodimer which binds Holliday junction (HJ) DNA. The HJ becomes 2-fold symmetrical on binding to RuvC with unstacked arms; it has a different conformation from HJ DNA in complex with RuvA. In the full resolvosome a probable DNA-RuvA(4)-RuvB(12)-RuvC(2) complex forms which resolves the HJ. The cofactor is Mg(2+).

The protein resides in the cytoplasm. It catalyses the reaction Endonucleolytic cleavage at a junction such as a reciprocal single-stranded crossover between two homologous DNA duplexes (Holliday junction).. Functionally, the RuvA-RuvB-RuvC complex processes Holliday junction (HJ) DNA during genetic recombination and DNA repair. Endonuclease that resolves HJ intermediates. Cleaves cruciform DNA by making single-stranded nicks across the HJ at symmetrical positions within the homologous arms, yielding a 5'-phosphate and a 3'-hydroxyl group; requires a central core of homology in the junction. The consensus cleavage sequence is 5'-(A/T)TT(C/G)-3'. Cleavage occurs on the 3'-side of the TT dinucleotide at the point of strand exchange. HJ branch migration catalyzed by RuvA-RuvB allows RuvC to scan DNA until it finds its consensus sequence, where it cleaves and resolves the cruciform DNA. The polypeptide is Crossover junction endodeoxyribonuclease RuvC (Campylobacter jejuni subsp. jejuni serotype O:6 (strain 81116 / NCTC 11828)).